A 510-amino-acid polypeptide reads, in one-letter code: Scarecrow-like protein 29 (510 aa).

Residues 90 to 142 (LDLPPEIQQPNDQSRKRSHDGFLEAQQVKKSARSKRKAIKSSEKSSKDGNKEG) form a disordered region. Over residues 102–111 (QSRKRSHDGF) the composition is skewed to basic and acidic residues. Residues 119–128 (KSARSKRKAI) show a composition bias toward basic residues. Positions 129-142 (KSSEKSSKDGNKEG) are enriched in basic and acidic residues. Residues 136 to 510 (KDGNKEGRWA…EAVSFCSLWK (375 aa)) enclose the GRAS domain. The segment at 143 to 205 (RWAEKLLNPC…HLSSSSVSSS (63 aa)) is leucine repeat I (LRI). Residues 224 to 294 (LLKFYEVSPW…GPPPRVRITV (71 aa)) are VHIID. The short motif at 259-263 (LHIID) is the VHIID element. Residues 312–337 (NYGSQLLGFARSLKINLQISVLDKLQ) are leucine repeat II (LRII). A PFYRE region spans residues 347–435 (LIVCAQFRLH…RKLMEGEATK (89 aa)). The tract at residues 438 to 510 (MNAGDMNEGK…EAVSFCSLWK (73 aa)) is SAW.

This sequence belongs to the GRAS family. As to expression, expressed in seedlings, roots and flowers.

It is found in the nucleus. Functionally, probable transcription factor involved in plant development. This is Scarecrow-like protein 29 (SCL29) from Arabidopsis thaliana (Mouse-ear cress).